Here is a 387-residue protein sequence, read N- to C-terminus: GTPase Obg (387 aa).

The region spanning 1–159 is the Obg domain; the sequence is MKFVDEAIIR…RSLKLELLLL (159 aa). The OBG-type G domain maps to 160-333; sequence ADVGLLGMPN…LALKLLDFID (174 aa). Residues 166–173, 191–195, 213–216, 283–286, and 314–316 each bind GTP; these read GMPNAGKS, FTTLV, DIPG, NKAD, and SAY. Mg(2+) is bound by residues S173 and T193.

Belongs to the TRAFAC class OBG-HflX-like GTPase superfamily. OBG GTPase family. As to quaternary structure, monomer. The cofactor is Mg(2+).

The protein localises to the cytoplasm. Functionally, an essential GTPase which binds GTP, GDP and possibly (p)ppGpp with moderate affinity, with high nucleotide exchange rates and a fairly low GTP hydrolysis rate. Plays a role in control of the cell cycle, stress response, ribosome biogenesis and in those bacteria that undergo differentiation, in morphogenesis control. In Shewanella pealeana (strain ATCC 700345 / ANG-SQ1), this protein is GTPase Obg.